The primary structure comprises 403 residues: MDGSKFDDAQTGEQKIRNFNINFGPQHPAAHGVLRLVLELDGEIVERCDPHIGLLHRGTEKLMESRTYLQNLPYFDRLDYVAPMNQEHAWCLAIEKLTGVEVPRRAQLIRVLYSEIGRILNHLLNITTQAMDVGALTPPLWGFEEREKLMIFYERACGARLHAAYFRPGGVHQDLPDELLDDIDLWAMEFPKVMDDIDGLLTENRIFKQRNCDIGVVTEDDIQKYGFSGVMVRGSGLAWDLRRAQPYECYDEFDFQIPVGKNGDCYDRYLVRMEEMRQSLSIIRQAIAKLREATGDVLARGKLTPPKRGDMKTSMESLIHHFKLYTEGFHVPEGEVYAAVEAPKGEFGVYLVADGSNKPYRAKLRAPGFLHLQAMDYVAKGHQLADVAAIIGTMDIVFGEIDR.

It belongs to the complex I 49 kDa subunit family. NDH-1 is composed of 14 different subunits. Subunits NuoB, C, D, E, F, and G constitute the peripheral sector of the complex.

Its subcellular location is the cell inner membrane. It catalyses the reaction a quinone + NADH + 5 H(+)(in) = a quinol + NAD(+) + 4 H(+)(out). NDH-1 shuttles electrons from NADH, via FMN and iron-sulfur (Fe-S) centers, to quinones in the respiratory chain. The immediate electron acceptor for the enzyme in this species is believed to be ubiquinone. Couples the redox reaction to proton translocation (for every two electrons transferred, four hydrogen ions are translocated across the cytoplasmic membrane), and thus conserves the redox energy in a proton gradient. The chain is NADH-quinone oxidoreductase subunit D from Ruegeria sp. (strain TM1040) (Silicibacter sp.).